A 176-amino-acid chain; its full sequence is MAKTDKVTAVAEITEQFKDSTATVITEYRGLSVSALATLRRSLGASATYAVAKNTLVKRAAADAGVEGLDELFAGPTAIAFIKGEPVDAAKAIKTFAKDNKALIIKGGYMDGRALSVAEVERIADLESREVLLAKLAGAMKGNLNKAAGLFAAPASQVARLAAALQEKKAGEESAA.

Belongs to the universal ribosomal protein uL10 family. In terms of assembly, part of the ribosomal stalk of the 50S ribosomal subunit. The N-terminus interacts with L11 and the large rRNA to form the base of the stalk. The C-terminus forms an elongated spine to which L12 dimers bind in a sequential fashion forming a multimeric L10(L12)X complex.

Its function is as follows. Forms part of the ribosomal stalk, playing a central role in the interaction of the ribosome with GTP-bound translation factors. The chain is Large ribosomal subunit protein uL10 from Mycobacteroides abscessus (strain ATCC 19977 / DSM 44196 / CCUG 20993 / CIP 104536 / JCM 13569 / NCTC 13031 / TMC 1543 / L948) (Mycobacterium abscessus).